A 253-amino-acid chain; its full sequence is Blue-light photoreceptor (253 aa).

Residues 6-79 (KFDVILKALN…AKIRHAINEK (74 aa)) form the PAS domain. An S-4a-FMN cysteine modification is found at Cys-56. The PAC domain occupies 80–133 (STANVLLKNYRKNGTSFMNELTIEPIYDDNDHLYFVGIQKDVTTEHNYQLELEK). The STAS domain maps to 142-253 (STPIVPIKEN…STIKEALQFY (112 aa)).

FMN binds covalently to cysteine after exposure to blue light and this bond is spontaneously broken in the dark.

Its function is as follows. Exhibits the same spectroscopical features and blue-light induced photochemistry as plants phototropins, with the reversible formation of a blue-shifted photoproduct, assigned to an FMN-cysteine thiol adduct. Positive regulator in the activation of the general stress transcription factor sigma-B. The sequence is that of Blue-light photoreceptor from Listeria innocua serovar 6a (strain ATCC BAA-680 / CLIP 11262).